The chain runs to 290 residues: NAD kinase (290 aa).

Asp72 serves as the catalytic Proton acceptor. NAD(+)-binding positions include 72–73 (DG), Lys77, 145–146 (NE), Asp175, 186–191 (TAYSLS), and Ala210.

The protein belongs to the NAD kinase family. Requires a divalent metal cation as cofactor.

It localises to the cytoplasm. The catalysed reaction is NAD(+) + ATP = ADP + NADP(+) + H(+). In terms of biological role, involved in the regulation of the intracellular balance of NAD and NADP, and is a key enzyme in the biosynthesis of NADP. Catalyzes specifically the phosphorylation on 2'-hydroxyl of the adenosine moiety of NAD to yield NADP. In Bacteroides fragilis (strain ATCC 25285 / DSM 2151 / CCUG 4856 / JCM 11019 / LMG 10263 / NCTC 9343 / Onslow / VPI 2553 / EN-2), this protein is NAD kinase.